We begin with the raw amino-acid sequence, 72 residues long: RTCNKTPSDQSKICPPGENICYTKTWCDAWCSQRGKIVELGCAATCPKVKAGVEIKCCSTDNCNKFKFGKPR.

Disulfide bonds link Cys3/Cys21, Cys14/Cys42, Cys27/Cys31, Cys46/Cys57, and Cys58/Cys63.

The protein belongs to the three-finger toxin family. Long-chain subfamily. Type II alpha-neurotoxin sub-subfamily. Expressed by the venom gland.

The protein resides in the secreted. In terms of biological role, binds with high affinity to muscular (alpha-1/CHRNA1) and neuronal (alpha-7/CHRNA7) nicotinic acetylcholine receptor (nAChR) and inhibits acetylcholine from binding to the receptor, thereby impairing neuromuscular and neuronal transmission. The sequence is that of Alpha-elapitoxin-Dpp2c from Dendroaspis polylepis polylepis (Black mamba).